We begin with the raw amino-acid sequence, 445 residues long: Trigger factor (445 aa).

In terms of domain architecture, PPIase FKBP-type spans 162 to 247; that stretch reads GDQVTIDAIG…IKAVHTAEPT (86 aa).

Belongs to the FKBP-type PPIase family. Tig subfamily.

The protein localises to the cytoplasm. The enzyme catalyses [protein]-peptidylproline (omega=180) = [protein]-peptidylproline (omega=0). Its function is as follows. Involved in protein export. Acts as a chaperone by maintaining the newly synthesized protein in an open conformation. Functions as a peptidyl-prolyl cis-trans isomerase. This chain is Trigger factor, found in Rickettsia rickettsii (strain Sheila Smith).